A 473-amino-acid polypeptide reads, in one-letter code: Vasculin-like protein 1 (473 aa).

A compositionally biased stretch (polar residues) spans 14 to 25 (STPQSSKSSTAT). The tract at residues 14-55 (STPQSSKSSTATFDKHGEHLSRGEGRFGISRRRHNSSDGFFN) is disordered. Over residues 26-38 (FDKHGEHLSRGEG) the composition is skewed to basic and acidic residues. 2 positions are modified to phosphoserine: S49 and S76. Disordered stretches follow at residues 88–127 (GTTG…RKGC) and 155–189 (DFPS…AKQP). Residues 103–112 (SQRSGGSSTG) are compositionally biased toward polar residues. The span at 113–125 (NHRHWNGSFHSRK) shows a compositional bias: basic residues. At S199 the chain carries Phosphoserine. Disordered regions lie at residues 235-267 (LVPK…SRES) and 281-316 (LAAG…RRTT). S289 carries the phosphoserine modification. Residues 292-309 (ESPSSTTPPIEISSSRLT) show a composition bias toward low complexity. At T298 the chain carries Phosphothreonine. The residue at position 381 (S381) is a Phosphoserine. Residues 453-473 (ECEDSDSETSSSQTSDDDAWK) are disordered.

Belongs to the vasculin family.

The protein localises to the nucleus. Possible transcription factor. In Mus musculus (Mouse), this protein is Vasculin-like protein 1 (Gpbp1l1).